We begin with the raw amino-acid sequence, 511 residues long: Bifunctional purine biosynthesis protein PurH (511 aa).

The MGS-like domain occupies 1–145; it reads MKKRALVSVS…KNHKFVSVIV (145 aa).

This sequence belongs to the PurH family.

It carries out the reaction (6R)-10-formyltetrahydrofolate + 5-amino-1-(5-phospho-beta-D-ribosyl)imidazole-4-carboxamide = 5-formamido-1-(5-phospho-D-ribosyl)imidazole-4-carboxamide + (6S)-5,6,7,8-tetrahydrofolate. The catalysed reaction is IMP + H2O = 5-formamido-1-(5-phospho-D-ribosyl)imidazole-4-carboxamide. It functions in the pathway purine metabolism; IMP biosynthesis via de novo pathway; 5-formamido-1-(5-phospho-D-ribosyl)imidazole-4-carboxamide from 5-amino-1-(5-phospho-D-ribosyl)imidazole-4-carboxamide (10-formyl THF route): step 1/1. Its pathway is purine metabolism; IMP biosynthesis via de novo pathway; IMP from 5-formamido-1-(5-phospho-D-ribosyl)imidazole-4-carboxamide: step 1/1. This chain is Bifunctional purine biosynthesis protein PurH, found in Bacillus cytotoxicus (strain DSM 22905 / CIP 110041 / 391-98 / NVH 391-98).